A 141-amino-acid chain; its full sequence is Nucleoside diphosphate kinase (141 aa).

ATP-binding residues include K9, F57, R85, T91, R102, and N112. Residue H115 is the Pros-phosphohistidine intermediate of the active site.

Belongs to the NDK family. As to quaternary structure, homotetramer. Mg(2+) is required as a cofactor.

The protein localises to the cytoplasm. The catalysed reaction is a 2'-deoxyribonucleoside 5'-diphosphate + ATP = a 2'-deoxyribonucleoside 5'-triphosphate + ADP. It carries out the reaction a ribonucleoside 5'-diphosphate + ATP = a ribonucleoside 5'-triphosphate + ADP. Major role in the synthesis of nucleoside triphosphates other than ATP. The ATP gamma phosphate is transferred to the NDP beta phosphate via a ping-pong mechanism, using a phosphorylated active-site intermediate. This Chlamydia abortus (strain DSM 27085 / S26/3) (Chlamydophila abortus) protein is Nucleoside diphosphate kinase.